The chain runs to 102 residues: Large ribosomal subunit protein bL21 (102 aa).

This sequence belongs to the bacterial ribosomal protein bL21 family. As to quaternary structure, part of the 50S ribosomal subunit. Contacts protein L20.

This protein binds to 23S rRNA in the presence of protein L20. This is Large ribosomal subunit protein bL21 from Exiguobacterium sp. (strain ATCC BAA-1283 / AT1b).